We begin with the raw amino-acid sequence, 150 residues long: Large ribosomal subunit protein bL9 (150 aa).

This sequence belongs to the bacterial ribosomal protein bL9 family.

Binds to the 23S rRNA. In Lactococcus lactis subsp. cremoris (strain MG1363), this protein is Large ribosomal subunit protein bL9.